Reading from the N-terminus, the 193-residue chain is Putative manganese efflux pump MntP (193 aa).

The next 6 helical transmembrane spans lie at 3 to 23 (MYATLILALALSMDAFAASIC), 41 to 61 (LIFGLAEACTPLIGWSLGLYA), 65 to 85 (IIEWDHWVAFTLLFILGCRMI), 106 to 126 (IVLITTAIATSLDAMAIGIGL), 133 to 153 (IVHTAMAIGMMTMIMATLGML), and 169 to 189 (IGGLILIAIGFNILFEHLELF).

The protein belongs to the MntP (TC 9.B.29) family.

Its subcellular location is the cell inner membrane. Its function is as follows. Probably functions as a manganese efflux pump. In Photorhabdus laumondii subsp. laumondii (strain DSM 15139 / CIP 105565 / TT01) (Photorhabdus luminescens subsp. laumondii), this protein is Putative manganese efflux pump MntP.